A 1193-amino-acid chain; its full sequence is Cysteine protease ATG4 (1193 aa).

Disordered stretches follow at residues 23 to 284 (AAIA…NKMS) and 358 to 474 (WRPI…KKKS). Positions 35–49 (NLPPPPPPDRIPPPK) are enriched in pro residues. The segment covering 50-59 (GRSHQQKFKI) has biased composition (basic residues). Basic and acidic residues-rich tracts occupy residues 60–72 (LRKE…RQPI), 117–127 (ANREEKKEKTS), and 140–153 (FGRD…KPEE). Positions 170–185 (SSSTSTDSTTSRSITS) are enriched in low complexity. Polar residues predominate over residues 186–205 (AFTRQNSIQSRRSPRTSFGQ). Residues 227–238 (SSTTSHDPSSDP) are compositionally biased toward low complexity. Polar residues-rich tracts occupy residues 253-262 (QGASMSSLSR), 270-284 (GGTS…NKMS), and 389-447 (LSMN…STLS). Residue C570 is the Nucleophile of the active site. Active-site residues include D789 and H791. Disordered regions lie at residues 807-869 (HSAK…SKYK), 899-924 (VPKS…TSTA), and 1000-1171 (QDEM…PARN). Over residues 835–846 (RTPETPRSTTPS) the composition is skewed to low complexity. 2 stretches are compositionally biased toward acidic residues: residues 1004–1029 (PSWE…EFEE) and 1070–1084 (HLDV…DDNE). Composition is skewed to basic and acidic residues over residues 1097-1112 (IARH…KREQ) and 1152-1164 (PRYE…EQER).

It belongs to the peptidase C54 family.

The protein localises to the cytoplasm. Its subcellular location is the nucleus. The protein resides in the preautophagosomal structure. The enzyme catalyses [protein]-C-terminal L-amino acid-glycyl-phosphatidylethanolamide + H2O = [protein]-C-terminal L-amino acid-glycine + a 1,2-diacyl-sn-glycero-3-phosphoethanolamine. Cysteine protease that plays a key role in cytoplasm to vacuole transport (Cvt) and autophagy by mediating both proteolytic activation and delipidation of ATG8. Required for selective autophagic degradation of the nucleus (nucleophagy) as well as for mitophagy which contributes to regulate mitochondrial quantity and quality by eliminating the mitochondria to a basal level to fulfill cellular energy requirements and preventing excess ROS production. The protease activity is required for proteolytic activation of ATG8: cleaves the C-terminal amino acid of ATG8 to reveal a C-terminal glycine. ATG8 ubiquitin-like activity requires the exposure of the glycine at the C-terminus for its conjugation to phosphatidylethanolamine (PE) and its insertion to membranes, which is necessary for autophagy. The ATG8-PE conjugate mediates tethering between adjacent membranes and stimulates membrane hemifusion, leading to expansion of the autophagosomal membrane during autophagy. In addition to the protease activity, also catalyzes deconjugation of PE-conjugated forms of ATG8 during macroautophagy: ATG8 delipidation is required to release the protein from membranes, which facilitates multiple events during macroautophagy, and especially for efficient autophagosome biogenesis, the assembly of ATG9-containing tubulovesicular clusters into phagophores/autophagosomes, and for the disassembly of PAS-associated ATG components. ATG8 delipidation by ATG4 also recycles ATG8-PE generated on inappropriate membranes to maintain a reservoir of unlipidated ATG8 that is required for autophagosome formation at the PAS. This is Cysteine protease ATG4 (ATG4) from Cryptococcus neoformans var. neoformans serotype D (strain JEC21 / ATCC MYA-565) (Filobasidiella neoformans).